Here is a 145-residue protein sequence, read N- to C-terminus: Ribosome maturation factor RimP (145 aa).

This sequence belongs to the RimP family.

The protein resides in the cytoplasm. In terms of biological role, required for maturation of 30S ribosomal subunits. The chain is Ribosome maturation factor RimP from Borreliella afzelii (strain PKo) (Borrelia afzelii).